The sequence spans 152 residues: Sec-independent protein translocase protein TatB (152 aa).

The chain crosses the membrane as a helical span at residues Met-1–Gly-21. Residues His-98 to Pro-115 are compositionally biased toward low complexity. The segment at His-98–Pro-152 is disordered. Pro residues predominate over residues Ala-116–Thr-127. Residues Ala-128–Pro-142 are compositionally biased toward low complexity.

The protein belongs to the TatB family. The Tat system comprises two distinct complexes: a TatABC complex, containing multiple copies of TatA, TatB and TatC subunits, and a separate TatA complex, containing only TatA subunits. Substrates initially bind to the TatABC complex, which probably triggers association of the separate TatA complex to form the active translocon.

Its subcellular location is the cell inner membrane. In terms of biological role, part of the twin-arginine translocation (Tat) system that transports large folded proteins containing a characteristic twin-arginine motif in their signal peptide across membranes. Together with TatC, TatB is part of a receptor directly interacting with Tat signal peptides. TatB may form an oligomeric binding site that transiently accommodates folded Tat precursor proteins before their translocation. This Pseudomonas fluorescens (strain ATCC BAA-477 / NRRL B-23932 / Pf-5) protein is Sec-independent protein translocase protein TatB.